Consider the following 387-residue polypeptide: Na(+)/H(+) antiporter NhaA (387 aa).

12 helical membrane-spanning segments follow: residues 16 to 36 (AGGV…NSSI), 53 to 73 (IEHY…GLEL), 89 to 109 (LLPI…HMFF), 118 to 138 (GSGI…SLLG), 147 to 167 (VFLT…IAIF), 171 to 191 (GIDV…FILN), 197 to 217 (ILWP…HSGV), 220 to 240 (TITG…PDSI), 251 to 271 (PVAF…IIDS), 283 to 303 (IGIF…FCAI), 321 to 341 (VIGV…ITLL), and 354 to 374 (IAIM…LKMT).

This sequence belongs to the NhaA Na(+)/H(+) (TC 2.A.33) antiporter family.

It localises to the cell inner membrane. It carries out the reaction Na(+)(in) + 2 H(+)(out) = Na(+)(out) + 2 H(+)(in). Na(+)/H(+) antiporter that extrudes sodium in exchange for external protons. This is Na(+)/H(+) antiporter NhaA from Cytophaga hutchinsonii (strain ATCC 33406 / DSM 1761 / CIP 103989 / NBRC 15051 / NCIMB 9469 / D465).